The sequence spans 470 residues: ATP synthase subunit beta (470 aa).

157–164 (GGAGVGKT) contributes to the ATP binding site.

This sequence belongs to the ATPase alpha/beta chains family. As to quaternary structure, F-type ATPases have 2 components, CF(1) - the catalytic core - and CF(0) - the membrane proton channel. CF(1) has five subunits: alpha(3), beta(3), gamma(1), delta(1), epsilon(1). CF(0) has three main subunits: a(1), b(2) and c(9-12). The alpha and beta chains form an alternating ring which encloses part of the gamma chain. CF(1) is attached to CF(0) by a central stalk formed by the gamma and epsilon chains, while a peripheral stalk is formed by the delta and b chains.

The protein resides in the cell inner membrane. It carries out the reaction ATP + H2O + 4 H(+)(in) = ADP + phosphate + 5 H(+)(out). Its function is as follows. Produces ATP from ADP in the presence of a proton gradient across the membrane. The catalytic sites are hosted primarily by the beta subunits. This chain is ATP synthase subunit beta, found in Geotalea uraniireducens (strain Rf4) (Geobacter uraniireducens).